Consider the following 451-residue polypeptide: uncharacterized protein (451 aa).

A disordered region spans residues 1–451; that stretch reads MSETENKTTT…KKEAAKNKSK (451 aa). Positions 9-22 are enriched in low complexity; it reads TTETPTTTDSTVTT. Positions 44–54 are enriched in polar residues; that stretch reads VKNQLSNTRTR. A compositionally biased stretch (basic and acidic residues) spans 73–99; that stretch reads KLIDTKERKEKKEKKEKEPKEPKEPKE. Over residues 114–147 the composition is skewed to acidic residues; it reads GDEEEDEEKEEDEEQKEEQSQEEDSEESEEEQNS. Residues 152–162 are compositionally biased toward basic residues; sequence KKKKKQAKKVA. Composition is skewed to basic and acidic residues over residues 163–192, 199–210, and 217–230; these read KKETEPKKKEAKPKKEAKPKKETTKKEKEA, STEKKEKEEKPK, and KKDQAAAEKKKDGD. Residues 232 to 244 show a composition bias toward low complexity; it reads STTTTATATTTTD. 2 stretches are compositionally biased toward basic and acidic residues: residues 284–303 and 311–340; these read TEEKKDEEKSEEKEKKETKK and AAAEKKKTAANPTDKKDGENKDVTPSDDKP. Positions 341–355 are enriched in low complexity; sequence AATTTTTTAAAATTT. The segment covering 356–383 has biased composition (basic and acidic residues); that stretch reads EEPKEKITKPAADKKKAPANKKAEKDQS. A compositionally biased stretch (low complexity) spans 393-425; it reads TTTATTTTTNKDATAPTTTTNKDATAPTTTTTK. Positions 441-451 are enriched in basic and acidic residues; that stretch reads PKKEAAKNKSK.

This is an uncharacterized protein from Dictyostelium discoideum (Social amoeba).